A 590-amino-acid chain; its full sequence is Bacillolysin (590 aa).

Positions 1–24 (MKKVWFSLLGGAMLLGSVASGASA) are cleaved as a signal peptide. Residues 25-286 (ESSVSGPAQL…GSIVFQYDII (262 aa)) constitute a propeptide, activation peptide. D339, D341, and D419 together coordinate Ca(2+). Position 423 (H423) interacts with Zn(2+). Residue E424 is part of the active site. 2 residues coordinate Zn(2+): H427 and E447. D466, Y469, T470, I473, and D476 together coordinate Ca(2+). The active-site Proton donor is the H507.

The protein belongs to the peptidase M4 family. It depends on Ca(2+) as a cofactor. The cofactor is Zn(2+).

It is found in the secreted. The enzyme catalyses Similar, but not identical, to that of thermolysin.. Involved in the generation of beta- and alpha-amylases from the large amylase precursor. The sequence is that of Bacillolysin (npr) from Paenibacillus polymyxa (Bacillus polymyxa).